A 90-amino-acid chain; its full sequence is RING finger protein Z (90 aa).

Gly-2 carries N-myristoyl glycine; by host lipidation. The RING-type; atypical zinc-finger motif lies at 32 to 68; it reads CKSCWQKFDSLVRCHDHYLCRHCLNLLLSVSDRCPLC. Positions 85 to 88 match the PPXY motif motif; it reads PPPY.

It belongs to the arenaviridae Z protein family. As to quaternary structure, interacts with protein NP; this interaction probably directs the encapsidated genome to budding sites. Interacts (via RING-type zinc finger) with polymerase L; this interaction inhibits viral transcription and replication, Z partially blocks the product exit tunnel for the releasing nascent RNA product. Interacts with the glycoprotein complex; this interaction plays a role in virion budding. Interacts (via RING-type zinc finger) with host EIF4E; this interaction results in conformational changes of both interacting proteins and reduces EIF4E affinity for its substrate, the 5'-m7 G cap structure. Interacts (via late-budding domain) with host TSG101; this interaction is essential for budding and release of viral particles. Interacts with host RPLP0; this interaction may serve to load ribosome-like particles inside the virion. Interacts with host PML; this interaction induces PML bodies redistribution in the cytoplasm upon viral infection. Post-translationally, myristoylation is required for the role of RING finger protein Z in assembly and budding.

It is found in the virion. The protein localises to the host cytoplasm. Its subcellular location is the host perinuclear region. The protein resides in the host cell membrane. In terms of biological role, plays a crucial role in virion assembly and budding. Expressed late in the virus life cycle, it acts as an inhibitor of viral transcription and RNA synthesis by interacting with the viral polymerase L. Presumably recruits the NP encapsidated genome to cellular membranes at budding sites via direct interaction with NP. Plays critical roles in the final steps of viral release by interacting with host TSG101, a member of the vacuolar protein-sorting pathway and using other cellular host proteins involved in vesicle formation pathway. The budding of the virus progeny occurs after association of protein Z with the viral glycoprotein complex SSP-GP1-GP2 at the cell periphery, step that requires myristoylation of protein Z. Also selectively represses protein production by associating with host EIF4E. In cell-based minigenome assay, has an inhibitory effect on the ribonucleoprotein machinery (vRNP), which is responsible for the replication and transcription of the viral genome. This is RING finger protein Z from Homo sapiens (Human).